Here is an 82-residue protein sequence, read N- to C-terminus: Small ribosomal subunit protein bS18 (82 aa).

Residues 1–20 (MSEINQTVTRRPFHRRRKTC) form a disordered region.

Belongs to the bacterial ribosomal protein bS18 family. As to quaternary structure, part of the 30S ribosomal subunit. Forms a tight heterodimer with protein bS6.

In terms of biological role, binds as a heterodimer with protein bS6 to the central domain of the 16S rRNA, where it helps stabilize the platform of the 30S subunit. The polypeptide is Small ribosomal subunit protein bS18 (Bartonella quintana (strain Toulouse) (Rochalimaea quintana)).